An 862-amino-acid polypeptide reads, in one-letter code: uncharacterized protein (862 aa).

An N-terminal signal peptide occupies residues 1-25; sequence MKPRPYSVFLFLHIVFYSLLSAVNG. Residues 26–61 are Lumenal-facing; the sequence is SPSLDYFETCSNFVPRAGIPTFSPYAVIKNFDEVNR. The helical transmembrane segment at 62–82 threads the bilayer; that stretch reads MYYIQVVGNLSGVITIVGGNG. The Cytoplasmic segment spans residues 83–187; that stretch reads SHIHAASVYS…STTLYYFYPV (105 aa). Residues 188-208 form a helical membrane-spanning segment; that stretch reads ISYLVVVSLAYVSFSIIYALF. Topologically, residues 209–230 are lumenal; the sequence is LNPWTGSLDPFKSIFNFNMDPD. A helical membrane pass occupies residues 231–250; it reads ALRLTSLGFFDFVQYLQFAV. Topologically, residues 251–256 are cytoplasmic; it reads STAQVS. The helical transmembrane segment at 257–277 threads the bilayer; sequence VMFPKFYINIMAALSWGTALF. Residues 278–329 lie on the Lumenal side of the membrane; sequence RFPIFSEPAEYQFADFADLSVASSSYADYLPKSYGMYSFLDSIGIGTACWLP. A helical transmembrane segment spans residues 330–350; that stretch reads FLIVMVIYLFAALFVALLVIF. The Cytoplasmic portion of the chain corresponds to 351 to 372; it reads LKWLMSRIFNETIAETRWDTWS. Residues 373 to 393 traverse the membrane as a helical segment; that stretch reads FIAGSLIRLYFLTYFPTVAYM. Residues 394–404 are Lumenal-facing; the sequence is SFQFVAPPTGY. Residues 405 to 425 form a helical membrane-spanning segment; that stretch reads EIIPVLWFIFFGIFIPVYLYM. The Cytoplasmic segment spans residues 426–457; that stretch reads NLAFVEPSSKLLEDQTYLHLFGSIYNSFREER. The helical transmembrane segment at 458–480 threads the bilayer; that stretch reads VMFWIFPIAVQFMRGITVGVIGS. Over 481 to 483 the chain is Lumenal; it reads SGS. The helical transmembrane segment at 484-503 threads the bilayer; it reads AQLAIFFILEVANVVAYAYV. At 504 to 514 the chain is on the cytoplasmic side; that stretch reads RPHFPQTSMNT. The helical transmembrane segment at 515–535 threads the bilayer; the sequence is LNTFISTMRLITVILMIPLDP. Over 536–545 the chain is Lumenal; the sequence is RLKVLGISRD. The helical transmembrane segment at 546-566 threads the bilayer; that stretch reads LLAYAILFIHIMVCILFLLLS. Over 567–862 the chain is Cytoplasmic; the sequence is TQRFMEVSAR…AESAWSIPHP (296 aa). A compositionally biased stretch (polar residues) spans 668–686; that stretch reads QASSLVPSKNNTASSSSLM. Disordered regions lie at residues 668–717 and 815–862; these read QASS…SVRK and VLRS…IPHP. Over residues 689-700 the composition is skewed to low complexity; the sequence is SPVTPSSPYSTS. The segment covering 834–850 has biased composition (basic and acidic residues); that stretch reads EPSRDEQYSMERKKTDD.

This sequence belongs to the transient receptor potential (TRP) ion channel family.

The protein localises to the cytoplasm. It localises to the golgi apparatus membrane. This is an uncharacterized protein from Schizosaccharomyces pombe (strain 972 / ATCC 24843) (Fission yeast).